A 118-amino-acid polypeptide reads, in one-letter code: Ribonuclease P protein component (118 aa).

The protein belongs to the RnpA family. Consists of a catalytic RNA component (M1 or rnpB) and a protein subunit.

It carries out the reaction Endonucleolytic cleavage of RNA, removing 5'-extranucleotides from tRNA precursor.. Functionally, RNaseP catalyzes the removal of the 5'-leader sequence from pre-tRNA to produce the mature 5'-terminus. It can also cleave other RNA substrates such as 4.5S RNA. The protein component plays an auxiliary but essential role in vivo by binding to the 5'-leader sequence and broadening the substrate specificity of the ribozyme. This Shewanella denitrificans (strain OS217 / ATCC BAA-1090 / DSM 15013) protein is Ribonuclease P protein component.